We begin with the raw amino-acid sequence, 64 residues long: MSEQVKRVRVTQVGSPIGRKPGQKETLIGLGLHRMNASRELAATPETLGRIRKVKHLLKVEELS.

Residues 1–22 (MSEQVKRVRVTQVGSPIGRKPG) form a disordered region.

It belongs to the universal ribosomal protein uL30 family. As to quaternary structure, part of the 50S ribosomal subunit.

This is Large ribosomal subunit protein uL30 from Acidiphilium cryptum (strain JF-5).